A 318-amino-acid chain; its full sequence is MPMINLLLLILPTLIAMAFLMLTERKILGYTQLRKGPNIVGPYGLLQPFADAMKLFTKEPLKPSTSTTALYIIAPTLALTIALLLWTPLPMPNPLINLNLGLLFILATSSLTVYSILWSGWASNSNYALIGALRAVAQTISYEVTSAIILLSVLLMSGSFNLSTLITTQEHIWLLLPTWPLAMMWFISTLAETNRTPFDLTEGESELVSGFNTEYAAGPFALFFMAEYVNIIMMNALTTMIFLGTTHNAHRPELYTTCFTIKTLLLTSLFLWIRTTYPRFRYDQLMYLLWKNFLPLTLTLLMWYISLSTMIASIPPQT.

A run of 8 helical transmembrane segments spans residues 2 to 22, 69 to 89, 100 to 120, 147 to 167, 171 to 191, 222 to 242, 253 to 273, and 294 to 314; these read PMIN…FLML, ALYI…WTPL, LGLL…LWSG, AIIL…TLIT, HIWL…STLA, LFFM…TMIF, ELYT…FLWI, and LPLT…IASI.

This sequence belongs to the complex I subunit 1 family. In terms of assembly, core subunit of respiratory chain NADH dehydrogenase (Complex I) which is composed of 45 different subunits.

It is found in the mitochondrion inner membrane. The catalysed reaction is a ubiquinone + NADH + 5 H(+)(in) = a ubiquinol + NAD(+) + 4 H(+)(out). In terms of biological role, core subunit of the mitochondrial membrane respiratory chain NADH dehydrogenase (Complex I) which catalyzes electron transfer from NADH through the respiratory chain, using ubiquinone as an electron acceptor. Essential for the catalytic activity and assembly of complex I. In Hylobates lar (Lar gibbon), this protein is NADH-ubiquinone oxidoreductase chain 1 (MT-ND1).